An 89-amino-acid chain; its full sequence is Large ribosomal subunit protein uL29c (89 aa).

It belongs to the universal ribosomal protein uL29 family.

The protein resides in the plastid. It is found in the chloroplast. The sequence is that of Large ribosomal subunit protein uL29c (rpl29) from Trieres chinensis (Marine centric diatom).